The following is a 212-amino-acid chain: Large ribosomal subunit protein bL25 (212 aa).

The disordered stretch occupies residues 1-25 (MSQSTIHKIAVKKRTETGKNENNRL). Over residues 13–24 (KRTETGKNENNR) the composition is skewed to basic and acidic residues.

It belongs to the bacterial ribosomal protein bL25 family. CTC subfamily. Part of the 50S ribosomal subunit; part of the 5S rRNA/L5/L18/L25 subcomplex. Contacts the 5S rRNA. Binds to the 5S rRNA independently of L5 and L18.

In terms of biological role, this is one of the proteins that binds to the 5S RNA in the ribosome where it forms part of the central protuberance. The polypeptide is Large ribosomal subunit protein bL25 (Leptospira borgpetersenii serovar Hardjo-bovis (strain L550)).